Consider the following 114-residue polypeptide: Ig heavy chain V region GOM (114 aa).

Residues 1–112 (EVQLVESGGD…YWGQGTLVTV (112 aa)) form the Ig-like domain.

The chain is Ig heavy chain V region GOM from Canis lupus familiaris (Dog).